The chain runs to 865 residues: Protein translocase subunit SecA (865 aa).

Residues Gln85, 103–107 (GEGKT), and Asp505 contribute to the ATP site. Zn(2+) contacts are provided by Cys847, Cys849, Cys858, and His859.

Belongs to the SecA family. As to quaternary structure, monomer and homodimer. Part of the essential Sec protein translocation apparatus which comprises SecA, SecYEG and auxiliary proteins SecDF. Other proteins may also be involved. Requires Zn(2+) as cofactor.

Its subcellular location is the cell membrane. The protein resides in the cytoplasm. It catalyses the reaction ATP + H2O + cellular proteinSide 1 = ADP + phosphate + cellular proteinSide 2.. In terms of biological role, part of the Sec protein translocase complex. Interacts with the SecYEG preprotein conducting channel. Has a central role in coupling the hydrolysis of ATP to the transfer of proteins into and across the cell membrane, serving as an ATP-driven molecular motor driving the stepwise translocation of polypeptide chains across the membrane. The protein is Protein translocase subunit SecA of Lactococcus lactis subsp. cremoris (strain MG1363).